The following is a 423-amino-acid chain: Serine--tRNA ligase (423 aa).

The segment at 107–130 (PHDSVPDGKSENDNREIRQWGAPP) is disordered. Over residues 110-124 (SVPDGKSENDNREIR) the composition is skewed to basic and acidic residues. 231–233 (TGE) is an L-serine binding site. Position 262–264 (262–264 (RSE)) interacts with ATP. L-serine is bound at residue Glu-285. Residue 349 to 352 (EISS) coordinates ATP. Ser-385 provides a ligand contact to L-serine.

The protein belongs to the class-II aminoacyl-tRNA synthetase family. Type-1 seryl-tRNA synthetase subfamily. In terms of assembly, homodimer. The tRNA molecule binds across the dimer.

It localises to the cytoplasm. It catalyses the reaction tRNA(Ser) + L-serine + ATP = L-seryl-tRNA(Ser) + AMP + diphosphate + H(+). It carries out the reaction tRNA(Sec) + L-serine + ATP = L-seryl-tRNA(Sec) + AMP + diphosphate + H(+). It participates in aminoacyl-tRNA biosynthesis; selenocysteinyl-tRNA(Sec) biosynthesis; L-seryl-tRNA(Sec) from L-serine and tRNA(Sec): step 1/1. Functionally, catalyzes the attachment of serine to tRNA(Ser). Is also able to aminoacylate tRNA(Sec) with serine, to form the misacylated tRNA L-seryl-tRNA(Sec), which will be further converted into selenocysteinyl-tRNA(Sec). The polypeptide is Serine--tRNA ligase (Coxiella burnetii (strain Dugway 5J108-111)).